A 480-amino-acid chain; its full sequence is GTPase Der (480 aa).

2 EngA-type G domains span residues 5 to 170 (PVVA…PSQE) and 178 to 351 (LKLA…QSSM). GTP contacts are provided by residues 11-18 (GRPNVGKS), 58-62 (DTGGI), 123-126 (NKVD), 184-191 (GRPNVGKS), 231-235 (DTAGV), and 296-299 (NKWD). The 85-residue stretch at 352–436 (FEVSTNRLTQ…PLNVVFKLNE (85 aa)) folds into the KH-like domain. The segment covering 438–454 (PYANKSDTPTKAKTQQL) has biased composition (polar residues). A disordered region spans residues 438–480 (PYANKSDTPTKAKTQQLRQRERNRAQKFTTKDKPRFTNKDKKR). The segment covering 455 to 480 (RQRERNRAQKFTTKDKPRFTNKDKKR) has biased composition (basic and acidic residues).

The protein belongs to the TRAFAC class TrmE-Era-EngA-EngB-Septin-like GTPase superfamily. EngA (Der) GTPase family. Associates with the 50S ribosomal subunit.

In terms of biological role, GTPase that plays an essential role in the late steps of ribosome biogenesis. This Psychrobacter cryohalolentis (strain ATCC BAA-1226 / DSM 17306 / VKM B-2378 / K5) protein is GTPase Der.